The following is a 559-amino-acid chain: CTP synthase (559 aa).

Positions 1 to 283 are amidoligase domain; the sequence is MSTSRTTTNN…DTFLIRRLDL (283 aa). Position 25 (Ser-25) interacts with CTP. Ser-25 is a binding site for UTP. ATP-binding positions include 26–31 and Asp-83; that span reads SLGKGL. Positions 83 and 157 each coordinate Mg(2+). CTP-binding positions include 164–166, 204–209, and Lys-240; these read DIE and KTKPTQ. Residues 204-209 and Lys-240 contribute to the UTP site; that span reads KTKPTQ. The Glutamine amidotransferase type-1 domain occupies 308–557; that stretch reads TVGIVGKYVD…VAAALAAAVT (250 aa). Residue Gly-371 coordinates L-glutamine. The active-site Nucleophile; for glutamine hydrolysis is Cys-398. Residues 399–402, Glu-421, and Arg-482 contribute to the L-glutamine site; that span reads LGLQ. Active-site residues include His-530 and Glu-532.

This sequence belongs to the CTP synthase family. In terms of assembly, homotetramer.

The catalysed reaction is UTP + L-glutamine + ATP + H2O = CTP + L-glutamate + ADP + phosphate + 2 H(+). It catalyses the reaction L-glutamine + H2O = L-glutamate + NH4(+). The enzyme catalyses UTP + NH4(+) + ATP = CTP + ADP + phosphate + 2 H(+). It functions in the pathway pyrimidine metabolism; CTP biosynthesis via de novo pathway; CTP from UDP: step 2/2. Its activity is regulated as follows. Allosterically activated by GTP, when glutamine is the substrate; GTP has no effect on the reaction when ammonia is the substrate. The allosteric effector GTP functions by stabilizing the protein conformation that binds the tetrahedral intermediate(s) formed during glutamine hydrolysis. Inhibited by the product CTP, via allosteric rather than competitive inhibition. In terms of biological role, catalyzes the ATP-dependent amination of UTP to CTP with either L-glutamine or ammonia as the source of nitrogen. Regulates intracellular CTP levels through interactions with the four ribonucleotide triphosphates. This chain is CTP synthase, found in Corynebacterium efficiens (strain DSM 44549 / YS-314 / AJ 12310 / JCM 11189 / NBRC 100395).